We begin with the raw amino-acid sequence, 575 residues long: Hemagglutinin-neuraminidase (575 aa).

Basic and acidic residues predominate over residues 1–10; that stretch reads MDGDRSKRDS. Positions 1–25 are disordered; sequence MDGDRSKRDSYWSTSPGGSTTKLVS. The Intravirion portion of the chain corresponds to 1-37; the sequence is MDGDRSKRDSYWSTSPGGSTTKLVSDSERSGKVDTWL. The segment at 10–14 is incorporation in virion; it reads SYWST. Over residues 11–24 the composition is skewed to polar residues; it reads YWSTSPGGSTTKLV. A helical membrane pass occupies residues 38–58; that stretch reads LILAFTQWALSIATVIICIVI. Residues 59-140 form an involved in interaction with F protein region; it reads AARQGYSMER…RQELTQLCDS (82 aa). Residues 59 to 575 are Virion surface-facing; that stretch reads AARQGYSMER…SIPKLCKAES (517 aa). Asn77 is a glycosylation site (N-linked (GlcNAc...) asparagine; by host). 4 cysteine pairs are disulfide-bonded: Cys192–Cys216, Cys258–Cys271, Cys357–Cys469, and Cys463–Cys473. Positions 254–259 are involved in neuraminidase activity; it reads NRKSCS. N-linked (GlcNAc...) asparagine; by host glycans are attached at residues Asn499 and Asn511. An intrachain disulfide couples Cys535 to Cys544.

This sequence belongs to the paramyxoviruses hemagglutinin-neuraminidase family. As to quaternary structure, homotetramer; composed of disulfide-linked homodimers. Interacts with F protein trimer. In terms of processing, N-glycosylated; glycans consist of a mixture of high mannose-type oligosaccharides and of complex-type oligosaccharides.

It is found in the virion membrane. Its subcellular location is the host cell membrane. It catalyses the reaction Hydrolysis of alpha-(2-&gt;3)-, alpha-(2-&gt;6)-, alpha-(2-&gt;8)- glycosidic linkages of terminal sialic acid residues in oligosaccharides, glycoproteins, glycolipids, colominic acid and synthetic substrates.. Attaches the virus to sialic acid-containing cell receptors and thereby initiating infection. Binding of HN protein to the receptor induces a conformational change that allows the F protein to trigger virion/cell membranes fusion. Its function is as follows. Neuraminidase activity ensures the efficient spread of the virus by dissociating the mature virions from the neuraminic acid containing glycoproteins. The sequence is that of Hemagglutinin-neuraminidase (HN) from Cavia cutleri (Guinea pig).